A 692-amino-acid chain; its full sequence is Elongation factor G (692 aa).

Residues 8-283 (NRIRNIGIAA…AVIDYLPAPT (276 aa)) form the tr-type G domain. GTP-binding positions include 17 to 24 (AHIDAGKT), 81 to 85 (DTPGH), and 135 to 138 (NKMD).

Belongs to the TRAFAC class translation factor GTPase superfamily. Classic translation factor GTPase family. EF-G/EF-2 subfamily.

The protein localises to the cytoplasm. Functionally, catalyzes the GTP-dependent ribosomal translocation step during translation elongation. During this step, the ribosome changes from the pre-translocational (PRE) to the post-translocational (POST) state as the newly formed A-site-bound peptidyl-tRNA and P-site-bound deacylated tRNA move to the P and E sites, respectively. Catalyzes the coordinated movement of the two tRNA molecules, the mRNA and conformational changes in the ribosome. The sequence is that of Elongation factor G (fusA) from Helicobacter pylori (strain ATCC 700392 / 26695) (Campylobacter pylori).